A 160-amino-acid polypeptide reads, in one-letter code: Large ribosomal subunit protein uL16 (160 aa).

Residues 138–148 (KNLEVSSQENT) are compositionally biased toward polar residues. Residues 138 to 160 (KNLEVSSQENTKNNKESQEEVKQ) are disordered. Residues 149 to 160 (KNNKESQEEVKQ) are compositionally biased toward basic and acidic residues.

The protein belongs to the universal ribosomal protein uL16 family. In terms of assembly, part of the 50S ribosomal subunit.

Binds 23S rRNA and is also seen to make contacts with the A and possibly P site tRNAs. This chain is Large ribosomal subunit protein uL16, found in Prochlorococcus marinus (strain MIT 9312).